A 94-amino-acid chain; its full sequence is Small ribosomal subunit protein uS19 (94 aa).

Belongs to the universal ribosomal protein uS19 family.

In terms of biological role, protein S19 forms a complex with S13 that binds strongly to the 16S ribosomal RNA. The polypeptide is Small ribosomal subunit protein uS19 (Wolbachia sp. subsp. Brugia malayi (strain TRS)).